Consider the following 225-residue polypeptide: MLGLDACELGAQLLELLRLALCARVLLTDKEGGQLPPEEALDEAVPEYRAPGKKSLLEIQQLDPDDESLVKYKRALLGPVLPAVDPSLPNVQVTRLTLISEQAPGPIVMDLTGELAALKNQVFVLKEGVDYKVKITFKVNKEIVSGLKCLHHTYRHGLRVDKAVYMVGSYGPSAQEYEFVTPVEEAPRGALVRGAYVVTSFFTDDDRTAHLSWEWGLYVCQDWER.

The protein belongs to the Rho GDI family.

It is found in the cytoplasm. In terms of biological role, inhibits GDP/GTP exchange reaction of RhoB. Interacts specifically with the GDP- and GTP-bound forms of post-translationally processed Rhob and Rhog proteins, both of which show a growth-regulated expression in mammalian cells. Stimulates the release of the GDP-bound but not the GTP-bound RhoB protein. Also inhibits the GDP/GTP exchange of RhoB but shows less ability to inhibit the dissociation of prebound GTP. The sequence is that of Rho GDP-dissociation inhibitor 3 (ARHGDIG) from Bos taurus (Bovine).